A 78-amino-acid polypeptide reads, in one-letter code: Large ribosomal subunit protein uL29 (78 aa).

The protein belongs to the universal ribosomal protein uL29 family.

This chain is Large ribosomal subunit protein uL29, found in Crocosphaera subtropica (strain ATCC 51142 / BH68) (Cyanothece sp. (strain ATCC 51142)).